The sequence spans 325 residues: Peroxidase 45 (325 aa).

Residues 1–25 form the signal peptide; it reads MEKNTSQTIFSNFFLLLLLSSCVSA. Cystine bridges form between Cys36-Cys115, Cys69-Cys74, Cys121-Cys321, and Cys200-Cys232. His67 (proton acceptor) is an active-site residue. Residues Asp68, Val71, Gly73, Asp75, and Ser77 each contribute to the Ca(2+) site. Position 163 (Pro163) interacts with substrate. His193 contributes to the heme b binding site. A Ca(2+)-binding site is contributed by Thr194. Residues Asp245, Ser248, and Asp253 each contribute to the Ca(2+) site.

Belongs to the peroxidase family. Classical plant (class III) peroxidase subfamily. Requires heme b as cofactor. Ca(2+) is required as a cofactor. Slightly expressed in roots.

It localises to the secreted. It carries out the reaction 2 a phenolic donor + H2O2 = 2 a phenolic radical donor + 2 H2O. In terms of biological role, removal of H(2)O(2), oxidation of toxic reductants, biosynthesis and degradation of lignin, suberization, auxin catabolism, response to environmental stresses such as wounding, pathogen attack and oxidative stress. These functions might be dependent on each isozyme/isoform in each plant tissue. The polypeptide is Peroxidase 45 (PER45) (Arabidopsis thaliana (Mouse-ear cress)).